Consider the following 222-residue polypeptide: MESVLNNEKAIVVFSGGQDSTTCLFYAKKHFKEVELVTFNYGQRHDTEIEVAKQIAQDQGMKHHVLDMSLLSQLTPNALTQHDMEITNNEDGIPNTFVPARNLLFLSFAGALAYQIGAKHIITGVCETDFSGYPDCRDSFIKSMNVTLSLAMDKDFVIHTPLMWLNKAETWKLSDELEVLDYIRTKTLTCYNGIIGDGCGECPACHLRQRGLNQYLESKGAL.

Residue 14–24 (FSGGQDSTTCL) participates in ATP binding. Zn(2+)-binding residues include Cys-190, Cys-199, Cys-202, and Cys-205.

This sequence belongs to the QueC family. As to quaternary structure, homodimer. Zn(2+) serves as cofactor.

The enzyme catalyses 7-carboxy-7-deazaguanine + NH4(+) + ATP = 7-cyano-7-deazaguanine + ADP + phosphate + H2O + H(+). The protein operates within purine metabolism; 7-cyano-7-deazaguanine biosynthesis. Its function is as follows. Catalyzes the ATP-dependent conversion of 7-carboxy-7-deazaguanine (CDG) to 7-cyano-7-deazaguanine (preQ(0)). This Staphylococcus aureus (strain Mu3 / ATCC 700698) protein is 7-cyano-7-deazaguanine synthase.